The chain runs to 295 residues: Accessory protein VasW (295 aa).

Plays an accessory role in VasX-mediated bacterial killing. The sequence is that of Accessory protein VasW from Vibrio cholerae serotype O1 (strain ATCC 39315 / El Tor Inaba N16961).